We begin with the raw amino-acid sequence, 595 residues long: DNA ligase (595 aa).

NAD(+)-binding positions include 32-36, 81-82, and Glu113; these read DEKYD and SL. Lys115 functions as the N6-AMP-lysine intermediate in the catalytic mechanism. Arg136, Glu178, Lys296, and Lys320 together coordinate NAD(+). 4 residues coordinate Zn(2+): Cys414, Cys417, Cys432, and Cys438.

It belongs to the NAD-dependent DNA ligase family. LigA subfamily. It depends on Mg(2+) as a cofactor. Mn(2+) serves as cofactor.

It catalyses the reaction NAD(+) + (deoxyribonucleotide)n-3'-hydroxyl + 5'-phospho-(deoxyribonucleotide)m = (deoxyribonucleotide)n+m + AMP + beta-nicotinamide D-nucleotide.. DNA ligase that catalyzes the formation of phosphodiester linkages between 5'-phosphoryl and 3'-hydroxyl groups in double-stranded DNA using NAD as a coenzyme and as the energy source for the reaction. It is essential for DNA replication and repair of damaged DNA. This is DNA ligase from Blochmanniella pennsylvanica (strain BPEN).